The primary structure comprises 221 residues: Riboflavin kinase (221 aa).

Residues 1–89 (MENIYIALKT…ISSILRFSQE (89 aa)) form an H-T-H motif-like region. A riboflavin kinase region spans residues 90–221 (LKLVGAVQDG…EVLASIDGKL (132 aa)). Residue 99–104 (GLGEGK) coordinates CDP. Mg(2+) is bound by residues threonine 128 and asparagine 130. Residues serine 185 and glutamate 192 each contribute to the FMN site. Residue 197-200 (KYLR) coordinates CDP.

Belongs to the archaeal riboflavin kinase family. Requires Mg(2+) as cofactor.

It carries out the reaction riboflavin + CTP = CDP + FMN + H(+). It participates in cofactor biosynthesis; FMN biosynthesis; FMN from riboflavin (CTP route): step 1/1. In terms of biological role, catalyzes the CTP-dependent phosphorylation of riboflavin (vitamin B2) to form flavin mononucleotide (FMN). In Picrophilus torridus (strain ATCC 700027 / DSM 9790 / JCM 10055 / NBRC 100828 / KAW 2/3), this protein is Riboflavin kinase (ribK).